A 477-amino-acid chain; its full sequence is Aspartyl/glutamyl-tRNA(Asn/Gln) amidotransferase subunit B (477 aa).

Belongs to the GatB/GatE family. GatB subfamily. Heterotrimer of A, B and C subunits.

It carries out the reaction L-glutamyl-tRNA(Gln) + L-glutamine + ATP + H2O = L-glutaminyl-tRNA(Gln) + L-glutamate + ADP + phosphate + H(+). It catalyses the reaction L-aspartyl-tRNA(Asn) + L-glutamine + ATP + H2O = L-asparaginyl-tRNA(Asn) + L-glutamate + ADP + phosphate + 2 H(+). Allows the formation of correctly charged Asn-tRNA(Asn) or Gln-tRNA(Gln) through the transamidation of misacylated Asp-tRNA(Asn) or Glu-tRNA(Gln) in organisms which lack either or both of asparaginyl-tRNA or glutaminyl-tRNA synthetases. The reaction takes place in the presence of glutamine and ATP through an activated phospho-Asp-tRNA(Asn) or phospho-Glu-tRNA(Gln). The sequence is that of Aspartyl/glutamyl-tRNA(Asn/Gln) amidotransferase subunit B from Bdellovibrio bacteriovorus (strain ATCC 15356 / DSM 50701 / NCIMB 9529 / HD100).